The chain runs to 365 residues: Holliday junction branch migration complex subunit RuvB (365 aa).

Residues 1–191 (MSPELGGGYD…FGFTAHMDFY (191 aa)) form a large ATPase domain (RuvB-L) region. Residues L30, R31, G72, K75, T76, S77, 138–140 (EDF), R181, Y191, and R228 each bind ATP. T76 is a binding site for Mg(2+). A small ATPAse domain (RuvB-S) region spans residues 192–262 (EPAELKQILM…IAHAALAVYD (71 aa)). A head domain (RuvB-H) region spans residues 265 to 365 (QLGLDRLDRS…QASLFDPEDP (101 aa)). Residues R320 and R325 each coordinate DNA.

It belongs to the RuvB family. Homohexamer. Forms an RuvA(8)-RuvB(12)-Holliday junction (HJ) complex. HJ DNA is sandwiched between 2 RuvA tetramers; dsDNA enters through RuvA and exits via RuvB. An RuvB hexamer assembles on each DNA strand where it exits the tetramer. Each RuvB hexamer is contacted by two RuvA subunits (via domain III) on 2 adjacent RuvB subunits; this complex drives branch migration. In the full resolvosome a probable DNA-RuvA(4)-RuvB(12)-RuvC(2) complex forms which resolves the HJ.

It is found in the cytoplasm. It carries out the reaction ATP + H2O = ADP + phosphate + H(+). Functionally, the RuvA-RuvB-RuvC complex processes Holliday junction (HJ) DNA during genetic recombination and DNA repair, while the RuvA-RuvB complex plays an important role in the rescue of blocked DNA replication forks via replication fork reversal (RFR). RuvA specifically binds to HJ cruciform DNA, conferring on it an open structure. The RuvB hexamer acts as an ATP-dependent pump, pulling dsDNA into and through the RuvAB complex. RuvB forms 2 homohexamers on either side of HJ DNA bound by 1 or 2 RuvA tetramers; 4 subunits per hexamer contact DNA at a time. Coordinated motions by a converter formed by DNA-disengaged RuvB subunits stimulates ATP hydrolysis and nucleotide exchange. Immobilization of the converter enables RuvB to convert the ATP-contained energy into a lever motion, pulling 2 nucleotides of DNA out of the RuvA tetramer per ATP hydrolyzed, thus driving DNA branch migration. The RuvB motors rotate together with the DNA substrate, which together with the progressing nucleotide cycle form the mechanistic basis for DNA recombination by continuous HJ branch migration. Branch migration allows RuvC to scan DNA until it finds its consensus sequence, where it cleaves and resolves cruciform DNA. The sequence is that of Holliday junction branch migration complex subunit RuvB from Rhodococcus opacus (strain B4).